A 159-amino-acid polypeptide reads, in one-letter code: Xanthine dehydrogenase iron-sulfur-binding subunit (159 aa).

One can recognise a 2Fe-2S ferredoxin-type domain in the interval 7-82 (ITIECTINGM…GKEIRTLEGE (76 aa)). [2Fe-2S] cluster contacts are provided by C44, C49, and C52.

Heterotrimer of XdhA, XdhB and XdhC. Requires [2Fe-2S] cluster as cofactor.

Its pathway is purine metabolism; hypoxanthine degradation; urate from hypoxanthine: step 1/2. Functionally, iron-sulfur subunit of the xanthine dehydrogenase complex. This chain is Xanthine dehydrogenase iron-sulfur-binding subunit (xdhC), found in Escherichia coli O157:H7.